We begin with the raw amino-acid sequence, 357 residues long: Putative RING-H2 finger protein ATL37 (357 aa).

Positions 1-31 are cleaved as a signal peptide; it reads MTIFTRDFSHRILACVLLPLFLFQCLPYVTC. The chain crosses the membrane as a helical span at residues 47-67; that stretch reads SSIIGIVLLSLFLLLLVVYCL. The RING-type; atypical zinc finger occupies 120-162; sequence CAICLCEFEDEEPLRWMPPCSHTFHANCIDEWLSSRSTCPVCR. The tract at residues 172-210 is disordered; the sequence is SFPHPSMDVETGNAQRGVQESPDERSLTGSSVTCNNNAN. The segment covering 198 to 210 has biased composition (polar residues); that stretch reads LTGSSVTCNNNAN. Ser-273 is modified (phosphoserine). Disordered stretches follow at residues 281–304 and 327–357; these read RSSR…QGRQ and LDRD…PEKN. Positions 283–304 are enriched in polar residues; the sequence is SRQGYRSGSVGNERTGFSQGRQ. Residues 340 to 357 show a composition bias toward basic and acidic residues; that stretch reads NDKDFGERSFQRLMPEKN.

It belongs to the RING-type zinc finger family. ATL subfamily.

It is found in the membrane. It catalyses the reaction S-ubiquitinyl-[E2 ubiquitin-conjugating enzyme]-L-cysteine + [acceptor protein]-L-lysine = [E2 ubiquitin-conjugating enzyme]-L-cysteine + N(6)-ubiquitinyl-[acceptor protein]-L-lysine.. Its pathway is protein modification; protein ubiquitination. The chain is Putative RING-H2 finger protein ATL37 (ATL37) from Arabidopsis thaliana (Mouse-ear cress).